Reading from the N-terminus, the 229-residue chain is Ribosome maturation factor RimM (229 aa).

A disordered region spans residues 1–21 (MAGHDSGNAKRGRSPSFGVFV). One can recognise a PRC barrel domain in the interval 148–229 (ADEFYWVDLI…RVVVDWEADY (82 aa)).

Belongs to the RimM family. As to quaternary structure, binds ribosomal protein uS19.

Its subcellular location is the cytoplasm. Its function is as follows. An accessory protein needed during the final step in the assembly of 30S ribosomal subunit, possibly for assembly of the head region. Essential for efficient processing of 16S rRNA. May be needed both before and after RbfA during the maturation of 16S rRNA. It has affinity for free ribosomal 30S subunits but not for 70S ribosomes. The sequence is that of Ribosome maturation factor RimM from Burkholderia pseudomallei (strain 1106a).